Reading from the N-terminus, the 341-residue chain is Phenylalanine--tRNA ligase alpha subunit (341 aa).

Residue Glu-256 participates in Mg(2+) binding.

It belongs to the class-II aminoacyl-tRNA synthetase family. Phe-tRNA synthetase alpha subunit type 1 subfamily. As to quaternary structure, tetramer of two alpha and two beta subunits. Mg(2+) is required as a cofactor.

Its subcellular location is the cytoplasm. The catalysed reaction is tRNA(Phe) + L-phenylalanine + ATP = L-phenylalanyl-tRNA(Phe) + AMP + diphosphate + H(+). This chain is Phenylalanine--tRNA ligase alpha subunit, found in Clostridium perfringens (strain 13 / Type A).